The chain runs to 224 residues: Cytidylate kinase (224 aa).

11–19 (GPAAAGKST) contacts ATP.

It belongs to the cytidylate kinase family. Type 1 subfamily.

The protein resides in the cytoplasm. It carries out the reaction CMP + ATP = CDP + ADP. The catalysed reaction is dCMP + ATP = dCDP + ADP. This is Cytidylate kinase from Listeria welshimeri serovar 6b (strain ATCC 35897 / DSM 20650 / CCUG 15529 / CIP 8149 / NCTC 11857 / SLCC 5334 / V8).